We begin with the raw amino-acid sequence, 96 residues long: Large ribosomal subunit protein uL23 (96 aa).

It belongs to the universal ribosomal protein uL23 family. Part of the 50S ribosomal subunit. Contacts protein L29, and trigger factor when it is bound to the ribosome.

In terms of biological role, one of the early assembly proteins it binds 23S rRNA. One of the proteins that surrounds the polypeptide exit tunnel on the outside of the ribosome. Forms the main docking site for trigger factor binding to the ribosome. In Thermus thermophilus (strain ATCC BAA-163 / DSM 7039 / HB27), this protein is Large ribosomal subunit protein uL23.